A 1040-amino-acid polypeptide reads, in one-letter code: Multidrug resistance protein MdtB (1040 aa).

Helical transmembrane passes span F16–I36, L347–A367, I369–L389, L396–I416, I440–F460, F472–P492, W537–I557, L863–I883, F888–A908, I911–V931, I968–V988, and I998–I1018.

This sequence belongs to the resistance-nodulation-cell division (RND) (TC 2.A.6) family. MdtB subfamily. Part of a tripartite efflux system composed of MdtA, MdtB and MdtC. MdtB forms a heteromultimer with MdtC.

Its subcellular location is the cell inner membrane. In terms of biological role, the MdtABC tripartite complex confers resistance against novobiocin and deoxycholate. The protein is Multidrug resistance protein MdtB of Escherichia coli (strain SE11).